Here is a 362-residue protein sequence, read N- to C-terminus: Serine/threonine-protein kinase SRK2D (362 aa).

Positions 23–279 (YDFVKDIGSG…IPEITSDKWF (257 aa)) constitute a Protein kinase domain. ATP-binding positions include 29-37 (IGSGNFGVA) and Lys-52. Asp-142 functions as the Proton acceptor in the catalytic mechanism.

It belongs to the protein kinase superfamily. Ser/Thr protein kinase family. As to quaternary structure, interacts with ABI1. Interacts with I-2, TOPP1 and TOPP2. Interacts with FREE1 (via C-terminus). In terms of tissue distribution, expressed in seeds, seedlings, roots (especially in tips), stems, leaves, shoots, flowers and siliques.

The enzyme catalyses L-seryl-[protein] + ATP = O-phospho-L-seryl-[protein] + ADP + H(+). It catalyses the reaction L-threonyl-[protein] + ATP = O-phospho-L-threonyl-[protein] + ADP + H(+). Functionally, together with SRK2I, key component and activator of the abscisic acid (ABA) signaling pathway that regulates numerous ABA responses, such as seed germination, Pro accumulation, root growth inhibition, dormancy and seedling growth, and, to a lesser extent, stomatal closure. In response to ABA, phosphorylates the ESCRT-I complex component FREE1, which is required for ABA-induced FREE1 nuclear import. The chain is Serine/threonine-protein kinase SRK2D (SRK2D) from Arabidopsis thaliana (Mouse-ear cress).